A 239-amino-acid chain; its full sequence is tRNA (guanine-N(1)-)-methyltransferase (239 aa).

Residues glycine 109 and 128–133 (IGDYVL) contribute to the S-adenosyl-L-methionine site.

It belongs to the RNA methyltransferase TrmD family. In terms of assembly, homodimer.

Its subcellular location is the cytoplasm. The enzyme catalyses guanosine(37) in tRNA + S-adenosyl-L-methionine = N(1)-methylguanosine(37) in tRNA + S-adenosyl-L-homocysteine + H(+). In terms of biological role, specifically methylates guanosine-37 in various tRNAs. The sequence is that of tRNA (guanine-N(1)-)-methyltransferase from Thermus thermophilus (strain ATCC BAA-163 / DSM 7039 / HB27).